The following is a 312-amino-acid chain: MVSLTTIEQSPVKCETTTEKESNDTRGTDSNENAETKETKKGFPFHDLAKLQKQYKNKSSRNESLVALIYLLGSMLSFCLLIFFTDFYLIPLFPTTTTMTDYIVFNFYLLNVFVFCMVHFIYHFVKNISLQQHLEHWQKFSYLSNINLLISSQITILYYLFYDYVFFFKIFTLLMNFIGLVAYFFILTDKLISSKRFNKTVFFISVSVVCCSLPLLTAIITFDGLENLKERIKVNAITWELVALVAASIIYVTRFPESLFRRNKKEEGWNHSEYLFHLLISGTAFYHFFILIQSYILMHSSLNQPELINFKS.

Positions 1 to 38 (MVSLTTIEQSPVKCETTTEKESNDTRGTDSNENAETKE) are disordered. Over 1-64 (MVSLTTIEQS…YKNKSSRNES (64 aa)) the chain is Cytoplasmic. A compositionally biased stretch (basic and acidic residues) spans 16-38 (TTTEKESNDTRGTDSNENAETKE). The chain crosses the membrane as a helical span at residues 65-85 (LVALIYLLGSMLSFCLLIFFT). Residues 86–101 (DFYLIPLFPTTTTMTD) are Lumenal-facing. A helical transmembrane segment spans residues 102-122 (YIVFNFYLLNVFVFCMVHFIY). Residues 123–141 (HFVKNISLQQHLEHWQKFS) lie on the Cytoplasmic side of the membrane. The helical transmembrane segment at 142–162 (YLSNINLLISSQITILYYLFY) threads the bilayer. Residues 163-165 (DYV) are Lumenal-facing. The chain crosses the membrane as a helical span at residues 166-186 (FFFKIFTLLMNFIGLVAYFFI). Residues 187 to 201 (LTDKLISSKRFNKTV) are Cytoplasmic-facing. The helical transmembrane segment at 202–222 (FFISVSVVCCSLPLLTAIITF) threads the bilayer. Residues 223–231 (DGLENLKER) are Lumenal-facing. The helical transmembrane segment at 232–252 (IKVNAITWELVALVAASIIYV) threads the bilayer. Residues 253–277 (TRFPESLFRRNKKEEGWNHSEYLFH) lie on the Cytoplasmic side of the membrane. A helical membrane pass occupies residues 278–298 (LLISGTAFYHFFILIQSYILM). At 299 to 312 (HSSLNQPELINFKS) the chain is on the lumenal side.

The protein belongs to the ADIPOR family.

It is found in the endoplasmic reticulum membrane. In terms of biological role, ADIPOR-like receptor involved in zinc metabolism either by altering membrane sterol content or by directly altering cellular zinc levels. This is ADIPOR-like receptor IZH4 (IZH4) from Saccharomyces cerevisiae (strain ATCC 204508 / S288c) (Baker's yeast).